Consider the following 719-residue polypeptide: Penicillin-binding protein 1A (719 aa).

Residues 62–223 are transglycosylase; that stretch reads LIADLGSERR…NQYDPYSHPE (162 aa). E91 serves as the catalytic Proton donor; for transglycosylase activity. Residues 297-611 form a transpeptidase region; that stretch reads DVYTNVDQEA…RLTPLVGNGL (315 aa). The active-site Acyl-ester intermediate; for transpeptidase activity is the S370. Residues 652–719 form a disordered region; it reads ARSTWSSPAP…QNQNPQPAQP (68 aa). The segment covering 654-719 has biased composition (low complexity); the sequence is STWSSPAPQQ…QNQNPQPAQP (66 aa).

In the N-terminal section; belongs to the glycosyltransferase 51 family. This sequence in the C-terminal section; belongs to the transpeptidase family. In terms of assembly, interacts with MreC in the elongasome.

Its subcellular location is the secreted. It catalyses the reaction [GlcNAc-(1-&gt;4)-Mur2Ac(oyl-L-Ala-gamma-D-Glu-L-Lys-D-Ala-D-Ala)](n)-di-trans,octa-cis-undecaprenyl diphosphate + beta-D-GlcNAc-(1-&gt;4)-Mur2Ac(oyl-L-Ala-gamma-D-Glu-L-Lys-D-Ala-D-Ala)-di-trans,octa-cis-undecaprenyl diphosphate = [GlcNAc-(1-&gt;4)-Mur2Ac(oyl-L-Ala-gamma-D-Glu-L-Lys-D-Ala-D-Ala)](n+1)-di-trans,octa-cis-undecaprenyl diphosphate + di-trans,octa-cis-undecaprenyl diphosphate + H(+). The enzyme catalyses Preferential cleavage: (Ac)2-L-Lys-D-Ala-|-D-Ala. Also transpeptidation of peptidyl-alanyl moieties that are N-acyl substituents of D-alanine.. Its pathway is cell wall biogenesis; peptidoglycan biosynthesis. In terms of biological role, cell wall formation. This Streptococcus pneumoniae (strain ATCC BAA-255 / R6) protein is Penicillin-binding protein 1A (pbpA).